The chain runs to 216 residues: MSFIDSLSPQNVIPVEEIRYDERGLVPAIVQDYLDGTVLMMAWMNRESLQKTLDTGETWFWSRSRQEFWHKGGTSGHTQKVQSIRYDCDSDALLVGVEQIGDIACHTGERSCFHQVEGKIVAPPGDTLSQVFQVICDRRNHPTESSYTSKLFAGGDNKILKKIGEESAEVVMACKDDDQEAIAGEVADLLYHTLVALAHHQVDIKAVYRKLQERRR.

The tract at residues 1–127 is phosphoribosyl-AMP cyclohydrolase; the sequence is MSFIDSLSPQ…GKIVAPPGDT (127 aa). The tract at residues 128-216 is phosphoribosyl-ATP pyrophosphohydrolase; the sequence is LSQVFQVICD…VYRKLQERRR (89 aa).

This sequence in the N-terminal section; belongs to the PRA-CH family. The protein in the C-terminal section; belongs to the PRA-PH family.

The protein resides in the cytoplasm. The catalysed reaction is 1-(5-phospho-beta-D-ribosyl)-ATP + H2O = 1-(5-phospho-beta-D-ribosyl)-5'-AMP + diphosphate + H(+). It carries out the reaction 1-(5-phospho-beta-D-ribosyl)-5'-AMP + H2O = 1-(5-phospho-beta-D-ribosyl)-5-[(5-phospho-beta-D-ribosylamino)methylideneamino]imidazole-4-carboxamide. It participates in amino-acid biosynthesis; L-histidine biosynthesis; L-histidine from 5-phospho-alpha-D-ribose 1-diphosphate: step 2/9. Its pathway is amino-acid biosynthesis; L-histidine biosynthesis; L-histidine from 5-phospho-alpha-D-ribose 1-diphosphate: step 3/9. This Nostoc sp. (strain PCC 7120 / SAG 25.82 / UTEX 2576) protein is Histidine biosynthesis bifunctional protein HisIE (hisI).